Reading from the N-terminus, the 558-residue chain is MAHIPEVLPKSIPIPAFIVTTSSYLWYYFNLVLTQIPGGQFIVSYIKKSHHDDPYRTTVEIGLILYGIIYYLSKPQQKKSLQAQKPNLSPQEIDALIEDWEPEPLVDPSATDEQSWRVAKTPVTMEMPIQNHITITRNNLQEKYTNVFNLASNNFLQLSATEPVKEVVKTTIKNYGVGACGPAGFYGNQDVHYTLEYDLAQFFGTQGSVLYGQDFCAAPSVLPAFTKRGDVIVADDQVSLPVQNALQLSRSTVYYFNHNDMNSLECLLNELTEQEKLEKLPAIPRKFIVTEGIFHNSGDLAPLPELTKLKNKYKFRLFVDETFSIGVLGATGRGLSEHFNMDRATAIDITVGSMATALGSTGGFVLGDSVMCLHQRIGSNAYCFSACLPAYTVTSVSKVLKLMDSNNDAVQTLQKLSKSLHDSFASDDSLRSYVIVTSSPVSAVLHLQLTPAYRSRKFGYTCEQLFETMSALQKKSQTNKFIEPYEEEEKFLQSIVDHALINYNVLITRNTIVLKQETLPIVPSLKICCNAAMSPEELKNACESVKQSILACCQESNK.

Residues 1–49 (MAHIPEVLPKSIPIPAFIVTTSSYLWYYFNLVLTQIPGGQFIVSYIKKS) lie on the Lumenal side of the membrane. Residues 50 to 84 (HHDDPYRTTVEIGLILYGIIYYLSKPQQKKSLQAQ) traverse the membrane as a helical segment. At 85–341 (KPNLSPQEID…GRGLSEHFNM (257 aa)) the chain is on the cytoplasmic side. Thr121 is modified (phosphothreonine). The helical transmembrane segment at 342 to 371 (DRATAIDITVGSMATALGSTGGFVLGDSVM) threads the bilayer. Over 372–424 (CLHQRIGSNAYCFSACLPAYTVTSVSKVLKLMDSNNDAVQTLQKLSKSLHDSF) the chain is Lumenal. A helical transmembrane segment spans residues 425–457 (ASDDSLRSYVIVTSSPVSAVLHLQLTPAYRSRK). Residues 458–558 (FGYTCEQLFE…ILACCQESNK (101 aa)) are Cytoplasmic-facing.

The protein belongs to the class-II pyridoxal-phosphate-dependent aminotransferase family. In terms of assembly, LCB1 and LCB2 encode essential subunits of the enzyme and form a heterodimer. Component of the SPOTS complex, at least composed of LCB1/2 (LCB1 and/or LCB2), ORM1/2 (ORM1 and/or ORM2), SAC1 and TSC3. Interacts with LCB2 and TSC3. The cofactor is pyridoxal 5'-phosphate.

It is found in the cytoplasm. It localises to the endoplasmic reticulum membrane. The catalysed reaction is L-serine + hexadecanoyl-CoA + H(+) = 3-oxosphinganine + CO2 + CoA. Its pathway is lipid metabolism; sphingolipid metabolism. Functionally, component of serine palmitoyltransferase (SPT), which catalyzes the committed step in the synthesis of sphingolipids, the condensation of serine with palmitoyl CoA to form the long chain base 3-ketosphinganine. This chain is Serine palmitoyltransferase 1 (LCB1), found in Saccharomyces cerevisiae (strain ATCC 204508 / S288c) (Baker's yeast).